The sequence spans 256 residues: 5'-nucleotidase SurE (256 aa).

4 residues coordinate a divalent metal cation: aspartate 8, aspartate 9, serine 40, and asparagine 92.

It belongs to the SurE nucleotidase family. Requires a divalent metal cation as cofactor.

The protein localises to the cytoplasm. It carries out the reaction a ribonucleoside 5'-phosphate + H2O = a ribonucleoside + phosphate. In terms of biological role, nucleotidase that shows phosphatase activity on nucleoside 5'-monophosphates. In Rhizobium meliloti (strain 1021) (Ensifer meliloti), this protein is 5'-nucleotidase SurE.